Consider the following 558-residue polypeptide: Dihydroxy-acid dehydratase (558 aa).

Cysteine 48 provides a ligand contact to [2Fe-2S] cluster. Mg(2+) is bound at residue aspartate 80. Cysteine 121 is a [2Fe-2S] cluster binding site. The Mg(2+) site is built by aspartate 122 and lysine 123. Lysine 123 is subject to N6-carboxylysine. Cysteine 193 contributes to the [2Fe-2S] cluster binding site. Position 445 (glutamate 445) interacts with Mg(2+). Serine 471 functions as the Proton acceptor in the catalytic mechanism.

Belongs to the IlvD/Edd family. As to quaternary structure, homodimer. The cofactor is [2Fe-2S] cluster. Mg(2+) serves as cofactor.

It carries out the reaction (2R)-2,3-dihydroxy-3-methylbutanoate = 3-methyl-2-oxobutanoate + H2O. It catalyses the reaction (2R,3R)-2,3-dihydroxy-3-methylpentanoate = (S)-3-methyl-2-oxopentanoate + H2O. The protein operates within amino-acid biosynthesis; L-isoleucine biosynthesis; L-isoleucine from 2-oxobutanoate: step 3/4. It functions in the pathway amino-acid biosynthesis; L-valine biosynthesis; L-valine from pyruvate: step 3/4. Functionally, functions in the biosynthesis of branched-chain amino acids. Catalyzes the dehydration of (2R,3R)-2,3-dihydroxy-3-methylpentanoate (2,3-dihydroxy-3-methylvalerate) into 2-oxo-3-methylpentanoate (2-oxo-3-methylvalerate) and of (2R)-2,3-dihydroxy-3-methylbutanoate (2,3-dihydroxyisovalerate) into 2-oxo-3-methylbutanoate (2-oxoisovalerate), the penultimate precursor to L-isoleucine and L-valine, respectively. The chain is Dihydroxy-acid dehydratase from Prochlorococcus marinus (strain SARG / CCMP1375 / SS120).